The sequence spans 561 residues: Putative transport protein YbjL (561 aa).

Transmembrane regions (helical) follow at residues 8–28, 32–52, 66–86, 94–114, and 158–178; these read LLNG…LCLG, LGSI…LLGQ, FMLF…SIFF, MLAL…GKLF, and NLSL…IVGA. RCK C-terminal domains are found at residues 200 to 288 and 292 to 373; these read RGLD…SFRN and VFDR…RIGF. 6 helical membrane passes run 383–403, 406–426, 451–471, 475–495, 503–523, and 540–560; these read LLAF…TFQF, FSFG…LGFM, VFMA…LGAI, MLIA…LFGA, ALLF…EIIS, and AIAN…CPGL.

It belongs to the AAE transporter (TC 2.A.81) family. YbjL subfamily.

It is found in the cell membrane. The protein is Putative transport protein YbjL of Shigella dysenteriae serotype 1 (strain Sd197).